A 246-amino-acid chain; its full sequence is NAD-dependent protein deacetylase (246 aa).

Residues M1–S246 enclose the Deacetylase sirtuin-type domain. NAD(+) contacts are provided by A22, T26, F33, R34, Q98, I100, D101, and H116. F33 lines the nicotinamide pocket. The nicotinamide site is built by I100 and D101. The active-site Proton acceptor is H116. Zn(2+)-binding residues include C124, C127, C148, and C151. Positions 189, 190, 214, 215, 216, 231, and 232 each coordinate NAD(+).

The protein belongs to the sirtuin family. Class U subfamily. The cofactor is Zn(2+).

The protein resides in the cytoplasm. The enzyme catalyses N(6)-acetyl-L-lysyl-[protein] + NAD(+) + H2O = 2''-O-acetyl-ADP-D-ribose + nicotinamide + L-lysyl-[protein]. Non-competitively inhibited by nicotinamide in vitro and in vivo, but not by nicotinic acid. Nicotinamide inhibits the deacetylation activity by reacting with a reaction intermediate. Functionally, NAD-dependent protein deacetylase which modulates the activities of several enzymes which are inactive in their acetylated form. Also has depropionylation activity in vitro. Also able to ADP-ribosylate peptide substrates with Arg or Lys in the +2 position. The role of this function in vivo is not clear. This is NAD-dependent protein deacetylase from Thermotoga maritima (strain ATCC 43589 / DSM 3109 / JCM 10099 / NBRC 100826 / MSB8).